Consider the following 450-residue polypeptide: ADP-specific phosphofructokinase (450 aa).

Positions 1–449 (MIPEHLSIYT…FLTYLEFLKR (449 aa)) constitute an ADPK domain. Mg(2+) contacts are provided by E260, E290, and D433. The active-site Proton acceptor is D433.

Belongs to the carbohydrate kinase PfkC family. Mg(2+) is required as a cofactor.

It localises to the cytoplasm. The catalysed reaction is beta-D-fructose 6-phosphate + ADP = beta-D-fructose 1,6-bisphosphate + AMP + H(+). It participates in carbohydrate degradation; glycolysis. Catalyzes the phosphorylation of fructose 6-phosphate to fructose 1,6-bisphosphate using ADP as the phosphate donor. This Pyrococcus horikoshii (strain ATCC 700860 / DSM 12428 / JCM 9974 / NBRC 100139 / OT-3) protein is ADP-specific phosphofructokinase.